Here is a 42-residue protein sequence, read N- to C-terminus: DRDSCIDKSRCSKYGYYQECQDCCKKAGHNRGTCMFFKCKCA.

4 disulfides stabilise this stretch: cysteine 5–cysteine 23, cysteine 11–cysteine 34, cysteine 20–cysteine 39, and cysteine 24–cysteine 41.

It belongs to the ergtoxin family. Gamma-KTx 1 subfamily. As to expression, expressed by the venom gland.

It localises to the secreted. Functionally, blocks human voltage-gated potassium channel Kv11.1/KCNH2/ERG1 (IC(50)=16.9 nM). The protein is Potassium channel gamma toxin gamma-KTx 1.9 of Centruroides tecomanus (Scorpion).